Reading from the N-terminus, the 1015-residue chain is Tolloid-like protein 2 (1015 aa).

Residues 1–25 (MPRATALGALVSLLLLLPLPRGAGG) form the signal peptide. 2 disordered regions span residues 24–49 (GGLGERPDATADYSELDGEEGTEQQL) and 88–130 (VGAT…TTLL). A propeptide spanning residues 26-149 (LGERPDATAD…AKTFSPRVRR (124 aa)) is cleaved from the precursor. The span at 103 to 113 (SESSPDTTAMD) shows a compositional bias: polar residues. Basic and acidic residues predominate over residues 115–125 (GTKEAGKDGRE). The Peptidase M12A domain maps to 149 to 349 (RATTSRTERI…AQARKLYKCP (201 aa)). N171 carries an N-linked (GlcNAc...) asparagine glycan. Intrachain disulfides connect C192/C348, C212/C234, C214/C215, and C351/C377. Zn(2+) is bound at residue H242. E243 is a catalytic residue. H246 and H252 together coordinate Zn(2+). 2 CUB domains span residues 351–463 (CGET…YEAT) and 464–576 (CGGD…FFKE). Residues N361 and N392 are each glycosylated (N-linked (GlcNAc...) asparagine). Cystine bridges form between C404–C426, C464–C490, C517–C539, C580–C592, C588–C601, C603–C616, C620–C646, C673–C695, C736–C747, C743–C756, C758–C771, and C776–C802. The 42-residue stretch at 576 to 617 (EVDECSWPDHGGCEHRCVNTLGSYKCACDPGYELAADKKMCE) folds into the EGF-like 1; calcium-binding domain. Residues 620–732 (CGGFITKLNG…RGFRAHFFSD (113 aa)) enclose the CUB 3 domain. N-linked (GlcNAc...) asparagine glycosylation is present at N628. The EGF-like 2; calcium-binding domain maps to 732-772 (DKDECAKDNGGCQHECVNTFGSYLCRCRNGYWLHENGHDCK). CUB domains follow at residues 776–888 (CAHK…HSTE) and 889–1005 (CGGR…YTST). A glycan (N-linked (GlcNAc...) asparagine) is linked at N805. 3 cysteine pairs are disulfide-bonded: C829/C851, C889/C919, and C946/C968. Omega-N-methylarginine is present on residues R963 and R966.

Requires Zn(2+) as cofactor.

The protein resides in the secreted. In terms of biological role, protease which specifically processes pro-lysyl oxidase. Required for the embryonic development. Predominant protease, which in the development, influences dorsal-ventral patterning and skeletogenesis. In Homo sapiens (Human), this protein is Tolloid-like protein 2 (TLL2).